The primary structure comprises 536 residues: Indolin-2-one monooxygenase (536 aa).

The chain crosses the membrane as a helical span at residues 18–34; it reads GTATHALLLGVLIFLVI. Cys480 is a heme binding site.

Belongs to the cytochrome P450 family. It depends on heme as a cofactor.

The protein resides in the membrane. It catalyses the reaction indolin-2-one + reduced [NADPH--hemoprotein reductase] + O2 = 3-hydroxyindolin-2-one + oxidized [NADPH--hemoprotein reductase] + H2O + H(+). It functions in the pathway secondary metabolite biosynthesis; 2,4-dihydroxy-1,4-benzoxazin-3-one biosynthesis; 2,4-dihydroxy-1,4-benzoxazin-3-one from indoleglycerol phosphate: step 3/5. Catalyzes the conversion of indolin-2-one to 3-hydroxyindolin-2-one. The polypeptide is Indolin-2-one monooxygenase (CYP71C2) (Zea mays (Maize)).